The following is a 341-amino-acid chain: Elongation factor Ts (341 aa).

The interval 80–83 (TDFV) is involved in Mg(2+) ion dislocation from EF-Tu.

Belongs to the EF-Ts family.

The protein localises to the cytoplasm. Its function is as follows. Associates with the EF-Tu.GDP complex and induces the exchange of GDP to GTP. It remains bound to the aminoacyl-tRNA.EF-Tu.GTP complex up to the GTP hydrolysis stage on the ribosome. The polypeptide is Elongation factor Ts (Lactobacillus gasseri (strain ATCC 33323 / DSM 20243 / BCRC 14619 / CIP 102991 / JCM 1131 / KCTC 3163 / NCIMB 11718 / NCTC 13722 / AM63)).